Here is a 750-residue protein sequence, read N- to C-terminus: Neprilysin (750 aa).

Gly2 carries N-myristoyl glycine lipidation. Over 2 to 28 (GRSESQMDITDINAPKPKKKQRWTPLE) the chain is Cytoplasmic. Ser4 and Ser6 each carry phosphoserine. Positions 16–23 (PKPKKKQR) match the Stop-transfer sequence motif. A helical; Signal-anchor for type II membrane protein transmembrane segment spans residues 29–51 (ISLSVLVLLLTIIAVTMIALYAT). Residues 52–750 (YDDGICKSSD…MNPERKCRVW (699 aa)) are Extracellular-facing. A Peptidase M13 domain is found at 56 to 750 (ICKSSDCIKS…MNPERKCRVW (695 aa)). 6 disulfide bridges follow: Cys57-Cys62, Cys80-Cys735, Cys88-Cys695, Cys143-Cys411, Cys234-Cys242, and Cys621-Cys747. An a peptide-binding site is contributed by Arg103. Residues Asn145 and Asn211 are each glycosylated (N-linked (GlcNAc...) asparagine). N-linked (GlcNAc...) asparagine glycans are attached at residues Asn285, Asn311, and Asn325. His584 contacts Zn(2+). Glu585 is an active-site residue. Residue His588 coordinates Zn(2+). Asn628 carries an N-linked (GlcNAc...) asparagine glycan. Glu647 is a Zn(2+) binding site. Catalysis depends on Asp651, which acts as the Proton donor.

This sequence belongs to the peptidase M13 family. Requires Zn(2+) as cofactor. Post-translationally, myristoylation is a determinant of membrane targeting. Glycosylation at Asn-628 is necessary both for surface expression and neutral endopeptidase activity.

The protein resides in the cell membrane. It catalyses the reaction Preferential cleavage of polypeptides between hydrophobic residues, particularly with Phe or Tyr at P1'.. The catalysed reaction is substance P + H2O = substance P(1-9) + L-Leu-L-Met-NH2. The enzyme catalyses substance P + H2O = substance P(1-7) + L-Phe-Gly-L-Leu-L-Met-NH2. It carries out the reaction neurotensin + H2O = neurotensin(1-11) + L-isoleucyl-L-leucine. It catalyses the reaction neurotensin + H2O = neurotensin(1-10) + L-tyrosyl-L-isoleucyl-L-leucine. Thermolysin-like specificity, but is almost confined on acting on polypeptides of up to 30 amino acids. Biologically important in the destruction of opioid peptides such as Met- and Leu-enkephalins by cleavage of a Gly-Phe bond. Catalyzes cleavage of bradykinin, substance P and neurotensin peptides. Able to cleave angiotensin-1, angiotensin-2 and angiotensin 1-9. Involved in the degradation of the atrial natriuretic factor (ANF). Displays UV-inducible elastase activity toward skin preelastic and elastic fibers. The polypeptide is Neprilysin (Mus musculus (Mouse)).